Here is a 450-residue protein sequence, read N- to C-terminus: Bifunctional protein GlmU (450 aa).

The pyrophosphorylase stretch occupies residues 1–217; sequence MKTLILAAGL…VDEITGVNNR (217 aa). Residues 6-9, Lys-20, Gln-68, 73-74, 95-97, Gly-134, Glu-146, Asn-161, and Asn-215 each bind UDP-N-acetyl-alpha-D-glucosamine; these read LAAG, GT, and YGD. Residue Asp-97 participates in Mg(2+) binding. A Mg(2+)-binding site is contributed by Asn-215. The linker stretch occupies residues 218–238; that stretch reads IQLANLEKKIRRKINEKLMNQ. Positions 239-450 are N-acetyltransferase; the sequence is GVRIIDPNAV…GGQKNANNKK (212 aa). UDP-N-acetyl-alpha-D-glucosamine is bound by residues Arg-320 and Lys-338. His-350 serves as the catalytic Proton acceptor. 2 residues coordinate UDP-N-acetyl-alpha-D-glucosamine: Tyr-353 and Asn-364. Acetyl-CoA contacts are provided by residues Ala-367, 373 to 374, Ser-392, Ala-410, and Arg-427; that span reads NY.

It in the N-terminal section; belongs to the N-acetylglucosamine-1-phosphate uridyltransferase family. In the C-terminal section; belongs to the transferase hexapeptide repeat family. As to quaternary structure, homotrimer. Requires Mg(2+) as cofactor.

The protein localises to the cytoplasm. The catalysed reaction is alpha-D-glucosamine 1-phosphate + acetyl-CoA = N-acetyl-alpha-D-glucosamine 1-phosphate + CoA + H(+). The enzyme catalyses N-acetyl-alpha-D-glucosamine 1-phosphate + UTP + H(+) = UDP-N-acetyl-alpha-D-glucosamine + diphosphate. The protein operates within nucleotide-sugar biosynthesis; UDP-N-acetyl-alpha-D-glucosamine biosynthesis; N-acetyl-alpha-D-glucosamine 1-phosphate from alpha-D-glucosamine 6-phosphate (route II): step 2/2. Its pathway is nucleotide-sugar biosynthesis; UDP-N-acetyl-alpha-D-glucosamine biosynthesis; UDP-N-acetyl-alpha-D-glucosamine from N-acetyl-alpha-D-glucosamine 1-phosphate: step 1/1. It participates in bacterial outer membrane biogenesis; LPS lipid A biosynthesis. Catalyzes the last two sequential reactions in the de novo biosynthetic pathway for UDP-N-acetylglucosamine (UDP-GlcNAc). The C-terminal domain catalyzes the transfer of acetyl group from acetyl coenzyme A to glucosamine-1-phosphate (GlcN-1-P) to produce N-acetylglucosamine-1-phosphate (GlcNAc-1-P), which is converted into UDP-GlcNAc by the transfer of uridine 5-monophosphate (from uridine 5-triphosphate), a reaction catalyzed by the N-terminal domain. The polypeptide is Bifunctional protein GlmU (Thermosipho melanesiensis (strain DSM 12029 / CIP 104789 / BI429)).